The sequence spans 636 residues: MIIMMNCFPCFTSQKSRNAPCTTNETNDDNVEHDEFRPPVVATTKRTEEREPAEQQPPVKTFNFRELATATKNFRQECLLGEGGFGRVYKGTLQSTGQLVAVKQLDKHGLHGNKEFLAEVLSLAKLEHPNLVKLIGYCADGDQRLLVFEYVSGGSLQDHLYEQKPGQKPMDWITRMKIAFGAAQGLDYLHDKVTPAVIYRDLKASNILLDAEFYPKLCDFGLHNLEPGTGDSLFLSSRVMDTYGYSAPEYTRGDDLTVKSDVYSFGVVLLELITGRRAIDTTKPNDEQNLVAWAQPIFKDPKRYPDMADPLLRKNFSERGLNQAVAITSMCLQEEPTARPLISDVMVALSFLSMSTEDGIPATVPMESFRDKSMSIALSRHGSCSVTPFCISRKDVGNKSSSSSDSEDEEEEKEQKAEKEEESTSKKRQEQEETATDSDDESDSNSEKDQEEEQSQLEKARESSSSSSDSGSERRSIDETNATAQSLKISYSNYSSEEEDNEKLSSKSSCKSNEESTFSRYDSGRDHDDSSRNTSMRINSLAHDDKEEDEEENHETRSYSDHDDSPRNTSMRINSLSHDDDEEEEEENHQTRLEHIHSSKSEDQSVYSDDDAGESGESSLHRIEAKEEEHISSDHD.

The interval 18–57 (NAPCTTNETNDDNVEHDEFRPPVVATTKRTEEREPAEQQP) is disordered. The 279-residue stretch at 74 to 352 (FRQECLLGEG…SDVMVALSFL (279 aa)) folds into the Protein kinase domain. ATP is bound by residues 80 to 88 (LGEGGFGRV) and lysine 103. The Proton acceptor role is filled by aspartate 201. Phosphoserine occurs at positions 205 and 236. At threonine 242 the chain carries Phosphothreonine. At tyrosine 250 the chain carries Phosphotyrosine. Residues 389–636 (FCISRKDVGN…EEEHISSDHD (248 aa)) form a disordered region. A coiled-coil region spans residues 403 to 434 (SSDSEDEEEEKEQKAEKEEESTSKKRQEQEET). Over residues 413-431 (KEQKAEKEEESTSKKRQEQ) the composition is skewed to basic and acidic residues. Residues 432–455 (EETATDSDDESDSNSEKDQEEEQS) are compositionally biased toward acidic residues. Residues 480-489 (TNATAQSLKI) are compositionally biased toward polar residues. Basic and acidic residues-rich tracts occupy residues 522–531 (DSGRDHDDSS) and 554–566 (HETRSYSDHDDSP). A compositionally biased stretch (polar residues) spans 567 to 576 (RNTSMRINSL). Basic and acidic residues-rich tracts occupy residues 588 to 603 (NHQTRLEHIHSSKSED) and 619 to 636 (SLHRIEAKEEEHISSDHD).

It belongs to the protein kinase superfamily. Ser/Thr protein kinase family. As to quaternary structure, interacts with PRK6. Palmitoylated. Expressed in mature pollen and in germinating pollen tubes.

It localises to the cell membrane. It is found in the cytoplasm. Functionally, involved in pollen tube guidance into micropyle. Participates in perception of the ovule-secreted peptide signal LURE1. The chain is Receptor-like kinase LIP1 from Arabidopsis thaliana (Mouse-ear cress).